Consider the following 937-residue polypeptide: MORC family CW-type zinc finger protein 4 (937 aa).

A CW-type zinc finger spans residues 420 to 472 (KVPDQTWVQCDECLKWRKLPGKIDPSMLPARWFCYYNSHPKYRRCSVPEEQEL). Zn(2+)-binding residues include C429, C432, C453, and C464. The disordered stretch occupies residues 606-637 (PEGENSHDKSSSERSTPPYLFPEYPEASKNTG). Residues 762–876 (KLKNQRELEE…LEMLQKAQVS (115 aa)) adopt a coiled-coil conformation.

In terms of tissue distribution, expressed at low levels in normal tissues, with highest expression levels in placenta and testis. Expression is significantly increased in subset of diffuse large B-cell lymphomas.

The protein resides in the nucleus. Functionally, histone methylation reader which binds to non-methylated (H3K4me0), monomethylated (H3K4me1), dimethylated (H3K4me2) and trimethylated (H3K4me3) 'Lys-4' on histone H3. The order of binding preference is H3K4me3 &gt; H3K4me2 &gt; H3K4me1 &gt; H3K4me0. The protein is MORC family CW-type zinc finger protein 4 (MORC4) of Homo sapiens (Human).